The chain runs to 449 residues: 3-phosphoshikimate 1-carboxyvinyltransferase (449 aa).

The interval 1 to 23 is disordered; that stretch reads MSHSASPKPATARRSEALTGEIR. 3-phosphoshikimate-binding residues include Lys-28, Ser-29, and Arg-33. Lys-28 contacts phosphoenolpyruvate. Positions 100 and 128 each coordinate phosphoenolpyruvate. Positions 173, 175, 326, and 353 each coordinate 3-phosphoshikimate. Gln-175 is a binding site for phosphoenolpyruvate. The active-site Proton acceptor is Asp-326. Phosphoenolpyruvate is bound by residues Arg-357 and Arg-402.

It belongs to the EPSP synthase family. Monomer.

The protein resides in the cytoplasm. The catalysed reaction is 3-phosphoshikimate + phosphoenolpyruvate = 5-O-(1-carboxyvinyl)-3-phosphoshikimate + phosphate. Its pathway is metabolic intermediate biosynthesis; chorismate biosynthesis; chorismate from D-erythrose 4-phosphate and phosphoenolpyruvate: step 6/7. In terms of biological role, catalyzes the transfer of the enolpyruvyl moiety of phosphoenolpyruvate (PEP) to the 5-hydroxyl of shikimate-3-phosphate (S3P) to produce enolpyruvyl shikimate-3-phosphate and inorganic phosphate. The chain is 3-phosphoshikimate 1-carboxyvinyltransferase from Pseudomonas sp. (strain PG2982).